The chain runs to 981 residues: Probable NAD kinase 2, chloroplastic (981 aa).

Residues 319–364 form a calmodulin-binding region; that stretch reads APSAEQVQRFAEIVSDSAKKPIYLHSQEGISRTSAMVSRWKQYVTR. Disordered stretches follow at residues 369–413 and 551–601; these read ATQN…DRTM and TNGK…AERN. Polar residues-rich tracts occupy residues 387–406, 551–563, and 581–596; these read TEQL…NGTP, TNGK…ASTS, and SDTS…GSQK.

The protein belongs to the NAD kinase family.

Its subcellular location is the plastid. The protein resides in the chloroplast. It carries out the reaction NAD(+) + ATP = ADP + NADP(+) + H(+). Involved in chlorophyll synthesis and chloroplast protection against oxidative damage. This is Probable NAD kinase 2, chloroplastic from Oryza sativa subsp. japonica (Rice).